The primary structure comprises 355 residues: DNA-directed RNA polymerase subunit alpha (355 aa).

Positions 1-248 (MYYDDGIPVF…EQLQPFISSD (248 aa)) are alpha N-terminal domain (alpha-NTD). The alpha C-terminal domain (alpha-CTD) stretch occupies residues 267–355 (YDPILLRKVD…ELARQHTDED (89 aa)).

It belongs to the RNA polymerase alpha chain family. In terms of assembly, homodimer. The RNAP catalytic core consists of 2 alpha, 1 beta, 1 beta' and 1 omega subunit. When a sigma factor is associated with the core the holoenzyme is formed, which can initiate transcription.

The enzyme catalyses RNA(n) + a ribonucleoside 5'-triphosphate = RNA(n+1) + diphosphate. DNA-dependent RNA polymerase catalyzes the transcription of DNA into RNA using the four ribonucleoside triphosphates as substrates. The chain is DNA-directed RNA polymerase subunit alpha from Wolbachia sp. subsp. Brugia malayi (strain TRS).